Here is a 330-residue protein sequence, read N- to C-terminus: N-acetyl-gamma-glutamyl-phosphate reductase (330 aa).

The active site involves C143.

It belongs to the NAGSA dehydrogenase family. Type 1 subfamily.

It is found in the cytoplasm. It carries out the reaction N-acetyl-L-glutamate 5-semialdehyde + phosphate + NADP(+) = N-acetyl-L-glutamyl 5-phosphate + NADPH + H(+). The protein operates within amino-acid biosynthesis; L-arginine biosynthesis; N(2)-acetyl-L-ornithine from L-glutamate: step 3/4. Functionally, catalyzes the NADPH-dependent reduction of N-acetyl-5-glutamyl phosphate to yield N-acetyl-L-glutamate 5-semialdehyde. The chain is N-acetyl-gamma-glutamyl-phosphate reductase from Methanocorpusculum labreanum (strain ATCC 43576 / DSM 4855 / Z).